The primary structure comprises 213 residues: MIVIFLGPPGAGKGTQGKKIAKKIDLPHIAVGDIFRTIIKTSTSEAELINNYVKQGALIPNEIVNQVIKIFLLSSQYKNGYILDGYPRNLEQARFFESFIKKAQIKIIYFDVADELLIKRVLGRYSCKNCGKIYNVHFLQPKTDYVCDVCSSNVFDYRRDDNEEVIKKRIEVYKTETYPLIDYYKNSGNFYIVNASKDEQEIENDIQKILKIN.

10 to 15 (GAGKGT) is a binding site for ATP. Residues 30-59 (AVGDIFRTIIKTSTSEAELINNYVKQGALI) form an NMP region. AMP-binding positions include Arg36, 57–59 (ALI), 85–88 (GYPR), and Gln92. Positions 123-161 (GRYSCKNCGKIYNVHFLQPKTDYVCDVCSSNVFDYRRDD) are LID. Residue Arg124 participates in ATP binding. Zn(2+) contacts are provided by Cys127 and Cys130. An ATP-binding site is contributed by 133 to 134 (IY). Cys147 and Cys150 together coordinate Zn(2+). AMP is bound by residues Arg158 and Arg169. Lys197 is an ATP binding site.

This sequence belongs to the adenylate kinase family. In terms of assembly, monomer.

The protein resides in the cytoplasm. It carries out the reaction AMP + ATP = 2 ADP. It functions in the pathway purine metabolism; AMP biosynthesis via salvage pathway; AMP from ADP: step 1/1. In terms of biological role, catalyzes the reversible transfer of the terminal phosphate group between ATP and AMP. Plays an important role in cellular energy homeostasis and in adenine nucleotide metabolism. The chain is Adenylate kinase from Rickettsia typhi (strain ATCC VR-144 / Wilmington).